We begin with the raw amino-acid sequence, 212 residues long: 2-C-methyl-D-erythritol 4-phosphate cytidylyltransferase (212 aa).

This sequence belongs to the IspD/TarI cytidylyltransferase family. IspD subfamily.

The enzyme catalyses 2-C-methyl-D-erythritol 4-phosphate + CTP + H(+) = 4-CDP-2-C-methyl-D-erythritol + diphosphate. It participates in isoprenoid biosynthesis; isopentenyl diphosphate biosynthesis via DXP pathway; isopentenyl diphosphate from 1-deoxy-D-xylulose 5-phosphate: step 2/6. Catalyzes the formation of 4-diphosphocytidyl-2-C-methyl-D-erythritol from CTP and 2-C-methyl-D-erythritol 4-phosphate (MEP). The polypeptide is 2-C-methyl-D-erythritol 4-phosphate cytidylyltransferase (Chlamydia caviae (strain ATCC VR-813 / DSM 19441 / 03DC25 / GPIC) (Chlamydophila caviae)).